The sequence spans 570 residues: Periplasmic trehalase (570 aa).

The N-terminal stretch at 1–34 (MIPPEIRRSVLLQKAIKLALAGTLLTFASFSATA) is a signal peptide. Residues Arg-159, 166–167 (WD), Asn-203, 212–214 (RSQ), 284–286 (RPE), and Gly-317 each bind substrate. Residues Asp-319 and Glu-503 each act as proton donor/acceptor in the active site. Position 518 (Glu-518) interacts with substrate. Positions 544-570 (KPCDSVPSTRPASLSATPTKTPSAATQ) are disordered. Residues 554–570 (PASLSATPTKTPSAATQ) show a composition bias toward low complexity.

The protein belongs to the glycosyl hydrolase 37 family. As to quaternary structure, monomer.

The protein resides in the periplasm. The catalysed reaction is alpha,alpha-trehalose + H2O = alpha-D-glucose + beta-D-glucose. Its function is as follows. Provides the cells with the ability to utilize trehalose at high osmolarity by splitting it into glucose molecules that can subsequently be taken up by the phosphotransferase-mediated uptake system. The polypeptide is Periplasmic trehalase (Salmonella choleraesuis (strain SC-B67)).